Reading from the N-terminus, the 71-residue chain is Guanine nucleotide-binding protein G(I)/G(S)/G(O) subunit gamma-2 (71 aa).

An N-acetylalanine modification is found at Ala2. Cys68 bears the Cysteine methyl ester mark. Residue Cys68 is the site of S-geranylgeranyl cysteine attachment. Residues 69-71 (AIL) constitute a propeptide, removed in mature form.

It belongs to the G protein gamma family. As to quaternary structure, g proteins are composed of 3 units, alpha, beta and gamma. In this context, interacts with GNB2. The heterodimer formed by GNB1 and GNG2 interacts with ARHGEF5. The heterodimer formed by GNB1 and GNG2 interacts with GRK2. Component of the TAS2R14-GNAI1 complex, consisting of TAS2R14, GNAI1, GNB1 and GNG2. Forms complexes with TAS2R14 and G-proteins; these complexes play a role in the perception of bitterness. Component of the TAS2R14-GNAT3 complex, consisting of TAS2R14, GNAT3, GNB1 and GNG2. Component of the TAS2R14-GNAS2 complex, consisting of TAS2R14, GNAS2, GNB1 and GNG2. Adrenal gland and brain.

The protein resides in the cell membrane. In terms of biological role, guanine nucleotide-binding proteins (G proteins) are involved as a modulator or transducer in various transmembrane signaling systems. The beta and gamma chains are required for the GTPase activity, for replacement of GDP by GTP, and for G protein-effector interaction. The sequence is that of Guanine nucleotide-binding protein G(I)/G(S)/G(O) subunit gamma-2 (GNG2) from Bos taurus (Bovine).